The sequence spans 87 residues: UPF0367 protein SynRCC307_0258 (87 aa).

The protein belongs to the UPF0367 family.

The polypeptide is UPF0367 protein SynRCC307_0258 (Synechococcus sp. (strain RCC307)).